The primary structure comprises 309 residues: Aurora kinase C (309 aa).

The tract at residues 1 to 33 (MSSPRAVVQLGKAQPAGEELATANQTAQQPSSP) is disordered. The span at 22-32 (TANQTAQQPSS) shows a compositional bias: polar residues. A Protein kinase domain is found at 43-293 (FEIGRPLGKG…LAQILKHPWV (251 aa)). Residues 49 to 57 (LGKGKFGNV) and Lys-72 contribute to the ATP site. Residue Asp-166 is the Proton acceptor of the active site. Thr-198 is modified (phosphothreonine; by PKA). The tract at residues 292–309 (WVQAHSRRVLPPCAQMAS) is interaction with BIRC5.

Belongs to the protein kinase superfamily. Ser/Thr protein kinase family. Aurora subfamily. Component of the chromosomal passenger complex (CPC) composed of at least BIRC5/survivin, CDCA8/borealin, INCENP, AURKB or AURKC; predominantly independent AURKB- and AURKC-containing complexes exist; in the complex interacts directly with BIRC5/survivin and INCENP. Interacts with TACC1. As to expression, isoform 1 and isoform 2 are expressed in testis. Elevated expression levels were seen only in a subset of cancer cell lines such as Hep-G2, Huh-7 and HeLa. Expression is maximum at M phase.

It localises to the nucleus. The protein resides in the chromosome. Its subcellular location is the centromere. The protein localises to the cytoplasm. It is found in the cytoskeleton. It localises to the spindle. The enzyme catalyses L-seryl-[protein] + ATP = O-phospho-L-seryl-[protein] + ADP + H(+). The catalysed reaction is L-threonyl-[protein] + ATP = O-phospho-L-threonyl-[protein] + ADP + H(+). Okadaic acid, an inhibitor of protein phosphatase 1 (PP1), protein phosphatase 2A (PP2A) and protein phosphatase 5 (PP5), increases AURKC activity. AURKC is also stabilized through its interaction with INCENP, which also acts as an activator. Its function is as follows. Serine/threonine-protein kinase component of the chromosomal passenger complex (CPC), a complex that acts as a key regulator of mitosis. The CPC complex has essential functions at the centromere in ensuring correct chromosome alignment and segregation and is required for chromatin-induced microtubule stabilization and spindle assembly. Also plays a role in meiosis and more particularly in spermatogenesis. Has redundant cellular functions with AURKB and can rescue an AURKB knockdown. Like AURKB, AURKC phosphorylates histone H3 at 'Ser-10' and 'Ser-28'. AURKC phosphorylates the CPC complex subunits BIRC5/survivin and INCENP leading to increased AURKC activity. Phosphorylates TACC1, another protein involved in cell division, at 'Ser-228'. The protein is Aurora kinase C (AURKC) of Homo sapiens (Human).